Consider the following 75-residue polypeptide: Small ribosomal subunit protein bS18 (75 aa).

This sequence belongs to the bacterial ribosomal protein bS18 family. As to quaternary structure, part of the 30S ribosomal subunit. Forms a tight heterodimer with protein bS6.

In terms of biological role, binds as a heterodimer with protein bS6 to the central domain of the 16S rRNA, where it helps stabilize the platform of the 30S subunit. This is Small ribosomal subunit protein bS18 from Psychrobacter sp. (strain PRwf-1).